A 254-amino-acid polypeptide reads, in one-letter code: Putative hydro-lyase SACE_1553 (254 aa).

It belongs to the D-glutamate cyclase family.

The polypeptide is Putative hydro-lyase SACE_1553 (Saccharopolyspora erythraea (strain ATCC 11635 / DSM 40517 / JCM 4748 / NBRC 13426 / NCIMB 8594 / NRRL 2338)).